We begin with the raw amino-acid sequence, 176 residues long: Lipoprotein signal peptidase (176 aa).

The next 4 membrane-spanning stretches (helical) occupy residues 10 to 30 (LFQF…AIVL), 48 to 68 (VPVL…AFSF), 78 to 98 (YFFT…LLRM), and 102 to 122 (MVVL…NLID). Active-site residues include Asp-131 and Asp-149. The chain crosses the membrane as a helical span at residues 141–161 (HFPAFNIADSAITLGTILLLI).

The protein belongs to the peptidase A8 family.

The protein resides in the cell inner membrane. The enzyme catalyses Release of signal peptides from bacterial membrane prolipoproteins. Hydrolyzes -Xaa-Yaa-Zaa-|-(S,diacylglyceryl)Cys-, in which Xaa is hydrophobic (preferably Leu), and Yaa (Ala or Ser) and Zaa (Gly or Ala) have small, neutral side chains.. It participates in protein modification; lipoprotein biosynthesis (signal peptide cleavage). Functionally, this protein specifically catalyzes the removal of signal peptides from prolipoproteins. The protein is Lipoprotein signal peptidase of Acinetobacter baumannii (strain ATCC 17978 / DSM 105126 / CIP 53.77 / LMG 1025 / NCDC KC755 / 5377).